Consider the following 293-residue polypeptide: uncharacterized protein (293 aa).

D119 is a catalytic residue.

This sequence belongs to the pseudouridine synthase RluA family.

The catalysed reaction is a uridine in RNA = a pseudouridine in RNA. This is an uncharacterized protein from Helicobacter pylori (strain J99 / ATCC 700824) (Campylobacter pylori J99).